A 205-amino-acid chain; its full sequence is Large ribosomal subunit protein uL4 (205 aa).

Belongs to the universal ribosomal protein uL4 family. Part of the 50S ribosomal subunit.

Its function is as follows. One of the primary rRNA binding proteins, this protein initially binds near the 5'-end of the 23S rRNA. It is important during the early stages of 50S assembly. It makes multiple contacts with different domains of the 23S rRNA in the assembled 50S subunit and ribosome. Functionally, forms part of the polypeptide exit tunnel. In Dinoroseobacter shibae (strain DSM 16493 / NCIMB 14021 / DFL 12), this protein is Large ribosomal subunit protein uL4.